A 111-amino-acid chain; its full sequence is Large ribosomal subunit protein uL23 (111 aa).

This sequence belongs to the universal ribosomal protein uL23 family. In terms of assembly, part of the 50S ribosomal subunit. Contacts protein L29, and trigger factor when it is bound to the ribosome.

In terms of biological role, one of the early assembly proteins it binds 23S rRNA. One of the proteins that surrounds the polypeptide exit tunnel on the outside of the ribosome. Forms the main docking site for trigger factor binding to the ribosome. This Chlamydia felis (strain Fe/C-56) (Chlamydophila felis) protein is Large ribosomal subunit protein uL23.